A 62-amino-acid chain; its full sequence is Prokaryotic ubiquitin-like protein Pup 2 (62 aa).

A disordered region spans residues 1–34 (MRQEKPKRHGREDDEPPEPAPAGRARDTTVGDDT). Residues 21-56 (PAGRARDTTVGDDTDELLDEIDGVLEENAVEFVRSY) form an ARC ATPase binding region. Residue Glu-62 forms an Isoglutamyl lysine isopeptide (Glu-Lys) (interchain with K-? in acceptor proteins) linkage.

This sequence belongs to the prokaryotic ubiquitin-like protein family. Strongly interacts with the proteasome-associated ATPase ARC through a hydrophobic interface; the interacting region of Pup lies in its C-terminal half. There is one Pup binding site per ARC hexamer ring.

It functions in the pathway protein degradation; proteasomal Pup-dependent pathway. Protein modifier that is covalently attached to lysine residues of substrate proteins, thereby targeting them for proteasomal degradation. The tagging system is termed pupylation. This is Prokaryotic ubiquitin-like protein Pup 2 from Saccharopolyspora erythraea (strain ATCC 11635 / DSM 40517 / JCM 4748 / NBRC 13426 / NCIMB 8594 / NRRL 2338).